Consider the following 701-residue polypeptide: Elongation factor G (701 aa).

Positions 8–290 constitute a tr-type G domain; the sequence is TQYRNIGISA…AIIEYLPSPK (283 aa). Residues 17 to 24, 88 to 92, and 142 to 145 contribute to the GTP site; these read AHIDAGKT, DTPGH, and NKMD.

It belongs to the TRAFAC class translation factor GTPase superfamily. Classic translation factor GTPase family. EF-G/EF-2 subfamily.

It is found in the cytoplasm. Its function is as follows. Catalyzes the GTP-dependent ribosomal translocation step during translation elongation. During this step, the ribosome changes from the pre-translocational (PRE) to the post-translocational (POST) state as the newly formed A-site-bound peptidyl-tRNA and P-site-bound deacylated tRNA move to the P and E sites, respectively. Catalyzes the coordinated movement of the two tRNA molecules, the mRNA and conformational changes in the ribosome. The sequence is that of Elongation factor G from Buchnera aphidicola subsp. Cinara cedri (strain Cc).